We begin with the raw amino-acid sequence, 180 residues long: NADH-quinone oxidoreductase subunit I (180 aa).

2 consecutive 4Fe-4S ferredoxin-type domains span residues 48 to 80 (IVLTRDPDGAERCVACNLCAVACPVGCISLQKA) and 90 to 119 (EFFRINFSRCIFCGMCEEACPTTALQLTPD). 8 residues coordinate [4Fe-4S] cluster: Cys60, Cys63, Cys66, Cys70, Cys99, Cys102, Cys105, and Cys109.

This sequence belongs to the complex I 23 kDa subunit family. In terms of assembly, NDH-1 is composed of 13 different subunits. Subunits NuoA, H, J, K, L, M, N constitute the membrane sector of the complex. The cofactor is [4Fe-4S] cluster.

It localises to the cell inner membrane. The catalysed reaction is a quinone + NADH + 5 H(+)(in) = a quinol + NAD(+) + 4 H(+)(out). Functionally, NDH-1 shuttles electrons from NADH, via FMN and iron-sulfur (Fe-S) centers, to quinones in the respiratory chain. The immediate electron acceptor for the enzyme in this species is believed to be ubiquinone. Couples the redox reaction to proton translocation (for every two electrons transferred, four hydrogen ions are translocated across the cytoplasmic membrane), and thus conserves the redox energy in a proton gradient. This chain is NADH-quinone oxidoreductase subunit I, found in Edwardsiella ictaluri (strain 93-146).